Reading from the N-terminus, the 187-residue chain is Large ribosomal subunit protein uL5 (187 aa).

It belongs to the universal ribosomal protein uL5 family. In terms of assembly, part of the 50S ribosomal subunit; part of the 5S rRNA/L5/L18/L25 subcomplex. Contacts the 5S rRNA and the P site tRNA. Forms a bridge to the 30S subunit in the 70S ribosome.

Functionally, this is one of the proteins that bind and probably mediate the attachment of the 5S RNA into the large ribosomal subunit, where it forms part of the central protuberance. In the 70S ribosome it contacts protein S13 of the 30S subunit (bridge B1b), connecting the 2 subunits; this bridge is implicated in subunit movement. Contacts the P site tRNA; the 5S rRNA and some of its associated proteins might help stabilize positioning of ribosome-bound tRNAs. The polypeptide is Large ribosomal subunit protein uL5 (Mycobacterium avium (strain 104)).